We begin with the raw amino-acid sequence, 68 residues long: ATP synthase subunit c (68 aa).

2 helical membrane passes run 4-24 and 45-65; these read IAAA…NGLI and IMFI…VIAF.

Belongs to the ATPase C chain family. In terms of assembly, F-type ATPases have 2 components, F(1) - the catalytic core - and F(0) - the membrane proton channel. F(1) has five subunits: alpha(3), beta(3), gamma(1), delta(1), epsilon(1). F(0) has three main subunits: a(1), b(2) and c(10-14). The alpha and beta chains form an alternating ring which encloses part of the gamma chain. F(1) is attached to F(0) by a central stalk formed by the gamma and epsilon chains, while a peripheral stalk is formed by the delta and b chains.

The protein localises to the cell membrane. F(1)F(0) ATP synthase produces ATP from ADP in the presence of a proton or sodium gradient. F-type ATPases consist of two structural domains, F(1) containing the extramembraneous catalytic core and F(0) containing the membrane proton channel, linked together by a central stalk and a peripheral stalk. During catalysis, ATP synthesis in the catalytic domain of F(1) is coupled via a rotary mechanism of the central stalk subunits to proton translocation. In terms of biological role, key component of the F(0) channel; it plays a direct role in translocation across the membrane. A homomeric c-ring of between 10-14 subunits forms the central stalk rotor element with the F(1) delta and epsilon subunits. This chain is ATP synthase subunit c, found in Staphylococcus saprophyticus subsp. saprophyticus (strain ATCC 15305 / DSM 20229 / NCIMB 8711 / NCTC 7292 / S-41).